The following is a 1429-amino-acid chain: Gag-Pol polyprotein (1429 aa).

Gly2 carries N-myristoyl glycine; by host lipidation. Residues 7 to 31 (VLSGGKLDKWEKIQLRPGGKKKYRL) form an interaction with Gp41 region. The segment at 8 to 43 (LSGGKLDKWEKIQLRPGGKKKYRLKHLVWASRELER) is interaction with host CALM1. The interval 12-19 (KLDKWEKI) is interaction with host AP3D1. An interaction with membrane phosphatidylinositol 4,5-bisphosphate and RNA region spans residues 14–33 (DKWEKIQLRPGGKKKYRLKH). The short motif at 16–22 (WEKIQLR) is the Nuclear export signal element. Positions 26–32 (KKKYRLK) match the Nuclear localization signal motif. The interval 73 to 77 (EELRS) is interaction with membrane phosphatidylinositol 4,5-bisphosphate. Positions 105–124 (EEEQNRTQQKTQQGKADKGV) are disordered. The span at 110–124 (RTQQKTQQGKADKGV) shows a compositional bias: polar residues. Position 128 is a phosphotyrosine; by host (Tyr128). The interaction with human PPIA/CYPA and NUP153 stretch occupies residues 185–223 (NTVGGHQAAMQMLKDTINEEAAEWDRMHPVQAGPIPPGQ). The dimerization/Multimerization of capsid protein p24 stretch occupies residues 273-359 (YSPVSILDIR…GGPGHKARVL (87 aa)). 2 CCHC-type zinc fingers span residues 385–402 (IKCFNCGKEGHLARNCRA) and 406–423 (KGCWKCGKEGHQMKDCSE). The disordered stretch occupies residues 439–479 (EARKFSSEQTRANSPTSRELWVRGEDNPLSETGNERSGTGS). Composition is skewed to polar residues over residues 445–455 (SEQTRANSPTS) and 467–479 (LSETGNERSGTGS). The dimerization of protease stretch occupies residues 484 to 488 (PQITL). A Peptidase A2 domain is found at 503 to 572 (REALLDTGAD…TPVNIIGRNM (70 aa)). The active-site For protease activity; shared with dimeric partner is Asp508. Dimerization of protease stretches follow at residues 532 to 538 (GIGGFIK) and 571 to 583 (NMLTQIGCTLNFP). In terms of domain architecture, Reverse transcriptase spans 626 to 816 (EGKISKIGPE…PPFLWMGYEL (191 aa)). Mg(2+)-binding residues include Asp692, Asp767, and Asp768. The interval 809–817 (FLWMGYELH) is RT 'primer grip'. The short motif at 980-996 (WGTWWTEYWQATWIPEW) is the Tryptophan repeat motif element. Residues 1016 to 1139 (IVGAETFYVD…VDKLVSSGIR (124 aa)) enclose the RNase H type-1 domain. Mg(2+)-binding residues include Asp1025, Glu1060, Asp1080, and Asp1131. The Integrase-type zinc-finger motif lies at 1145-1186 (DGIDKAQEEHEKYHNNWRAMASDFNLPPVVAKEIVASCDKCQ). The Zn(2+) site is built by His1154, His1158, Cys1182, and Cys1185. The Integrase catalytic domain maps to 1196–1346 (VDCSPGIWQL…SAGERIIDII (151 aa)). Mg(2+)-binding residues include Asp1206, Asp1258, and Glu1294. A DNA-binding region (integrase-type) is located at residues 1365 to 1411 (FRVYYRDSREPIWKGPAKLLWKGEGAVVIQNSEIKVVPRRKAKIIRD).

As to quaternary structure, homotrimer; further assembles as hexamers of trimers. Interacts with gp41 (via C-terminus). Interacts with host CALM1; this interaction induces a conformational change in the Matrix protein, triggering exposure of the myristate group. Interacts with host AP3D1; this interaction allows the polyprotein trafficking to multivesicular bodies during virus assembly. Part of the pre-integration complex (PIC) which is composed of viral genome, matrix protein, Vpr and integrase. Homodimer; the homodimer further multimerizes as homohexamers or homopentamers. Interacts with human PPIA/CYPA; This interaction stabilizes the capsid. Interacts with human NUP153. Interacts with host PDZD8; this interaction stabilizes the capsid. Interacts with monkey TRIM5; this interaction destabilizes the capsid. In terms of assembly, homodimer, whose active site consists of two apposed aspartic acid residues. As to quaternary structure, heterodimer of p66 RT and p51 RT (RT p66/p51). Heterodimerization of RT is essential for DNA polymerase activity. The overall folding of the subdomains is similar in p66 RT and p51 RT but the spatial arrangements of the subdomains are dramatically different. Homotetramer; may further associate as a homohexadecamer. Part of the pre-integration complex (PIC) which is composed of viral genome, matrix protein, Vpr and integrase. Interacts with human SMARCB1/INI1 and human PSIP1/LEDGF isoform 1. Interacts with human KPNA3; this interaction might play a role in nuclear import of the pre-integration complex. Interacts with human NUP153; this interaction might play a role in nuclear import of the pre-integration complex. Requires Mg(2+) as cofactor. Specific enzymatic cleavages by the viral protease yield mature proteins. The protease is released by autocatalytic cleavage. The polyprotein is cleaved during and after budding, this process is termed maturation. Proteolytic cleavage of p66 RT removes the RNase H domain to yield the p51 RT subunit. Nucleocapsid protein p7 might be further cleaved after virus entry. In terms of processing, tyrosine phosphorylated presumably in the virion by a host kinase. Phosphorylation is apparently not a major regulator of membrane association. Post-translationally, phosphorylated possibly by host MAPK1; this phosphorylation is necessary for Pin1-mediated virion uncoating. Methylated by host PRMT6, impairing its function by reducing RNA annealing and the initiation of reverse transcription.

Its subcellular location is the host cell membrane. It is found in the host endosome. It localises to the host multivesicular body. The protein localises to the virion membrane. The protein resides in the host nucleus. Its subcellular location is the host cytoplasm. It is found in the virion. The catalysed reaction is Specific for a P1 residue that is hydrophobic, and P1' variable, but often Pro.. It catalyses the reaction Endohydrolysis of RNA in RNA/DNA hybrids. Three different cleavage modes: 1. sequence-specific internal cleavage of RNA. Human immunodeficiency virus type 1 and Moloney murine leukemia virus enzymes prefer to cleave the RNA strand one nucleotide away from the RNA-DNA junction. 2. RNA 5'-end directed cleavage 13-19 nucleotides from the RNA end. 3. DNA 3'-end directed cleavage 15-20 nucleotides away from the primer terminus.. The enzyme catalyses 3'-end directed exonucleolytic cleavage of viral RNA-DNA hybrid.. It carries out the reaction DNA(n) + a 2'-deoxyribonucleoside 5'-triphosphate = DNA(n+1) + diphosphate. With respect to regulation, protease: The viral protease is inhibited by many synthetic protease inhibitors (PIs), such as amprenavir, atazanavir, indinavir, loprinavir, nelfinavir, ritonavir and saquinavir. Use of protease inhibitors in tritherapy regimens permit more ambitious therapeutic strategies. Reverse transcriptase/ribonuclease H: RT can be inhibited either by nucleoside RT inhibitors (NRTIs) or by non nucleoside RT inhibitors (NNRTIs). NRTIs act as chain terminators, whereas NNRTIs inhibit DNA polymerization by binding a small hydrophobic pocket near the RT active site and inducing an allosteric change in this region. Classical NRTIs are abacavir, adefovir (PMEA), didanosine (ddI), lamivudine (3TC), stavudine (d4T), tenofovir (PMPA), zalcitabine (ddC), and zidovudine (AZT). Classical NNRTIs are atevirdine (BHAP U-87201E), delavirdine, efavirenz (DMP-266), emivirine (I-EBU), and nevirapine (BI-RG-587). The tritherapies used as a basic effective treatment of AIDS associate two NRTIs and one NNRTI. In terms of biological role, mediates, with Gag polyprotein, the essential events in virion assembly, including binding the plasma membrane, making the protein-protein interactions necessary to create spherical particles, recruiting the viral Env proteins, and packaging the genomic RNA via direct interactions with the RNA packaging sequence (Psi). Gag-Pol polyprotein may regulate its own translation, by the binding genomic RNA in the 5'-UTR. At low concentration, the polyprotein would promote translation, whereas at high concentration, the polyprotein would encapsidate genomic RNA and then shut off translation. Functionally, targets the polyprotein to the plasma membrane via a multipartite membrane-binding signal, that includes its myristoylated N-terminus. Matrix protein is part of the pre-integration complex. Implicated in the release from host cell mediated by Vpu. Binds to RNA. Forms the conical core that encapsulates the genomic RNA-nucleocapsid complex in the virion. Most core are conical, with only 7% tubular. The core is constituted by capsid protein hexamer subunits. The core is disassembled soon after virion entry. Host restriction factors such as TRIM5-alpha or TRIMCyp bind retroviral capsids and cause premature capsid disassembly, leading to blocks in reverse transcription. Capsid restriction by TRIM5 is one of the factors which restricts HIV-1 to the human species. Host PIN1 apparently facilitates the virion uncoating. On the other hand, interactions with PDZD8 or CYPA stabilize the capsid. Its function is as follows. Encapsulates and protects viral dimeric unspliced genomic RNA (gRNA). Binds these RNAs through its zinc fingers. Acts as a nucleic acid chaperone which is involved in rearangement of nucleic acid secondary structure during gRNA retrotranscription. Also facilitates template switch leading to recombination. As part of the polyprotein, participates in gRNA dimerization, packaging, tRNA incorporation and virion assembly. In terms of biological role, aspartyl protease that mediates proteolytic cleavages of Gag and Gag-Pol polyproteins during or shortly after the release of the virion from the plasma membrane. Cleavages take place as an ordered, step-wise cascade to yield mature proteins. This process is called maturation. Displays maximal activity during the budding process just prior to particle release from the cell. Also cleaves Nef and Vif, probably concomitantly with viral structural proteins on maturation of virus particles. Hydrolyzes host EIF4GI and PABP1 in order to shut off the capped cellular mRNA translation. The resulting inhibition of cellular protein synthesis serves to ensure maximal viral gene expression and to evade host immune response. Also mediates cleavage of host YTHDF3. Mediates cleavage of host CARD8, thereby activating the CARD8 inflammasome, leading to the clearance of latent HIV-1 in patient CD4(+) T-cells after viral reactivation; in contrast, HIV-1 can evade CARD8-sensing when its protease remains inactive in infected cells prior to viral budding. Functionally, multifunctional enzyme that converts the viral RNA genome into dsDNA in the cytoplasm, shortly after virus entry into the cell. This enzyme displays a DNA polymerase activity that can copy either DNA or RNA templates, and a ribonuclease H (RNase H) activity that cleaves the RNA strand of RNA-DNA heteroduplexes in a partially processive 3' to 5' endonucleasic mode. Conversion of viral genomic RNA into dsDNA requires many steps. A tRNA(3)-Lys binds to the primer-binding site (PBS) situated at the 5'-end of the viral RNA. RT uses the 3' end of the tRNA primer to perform a short round of RNA-dependent minus-strand DNA synthesis. The reading proceeds through the U5 region and ends after the repeated (R) region which is present at both ends of viral RNA. The portion of the RNA-DNA heteroduplex is digested by the RNase H, resulting in a ssDNA product attached to the tRNA primer. This ssDNA/tRNA hybridizes with the identical R region situated at the 3' end of viral RNA. This template exchange, known as minus-strand DNA strong stop transfer, can be either intra- or intermolecular. RT uses the 3' end of this newly synthesized short ssDNA to perform the RNA-dependent minus-strand DNA synthesis of the whole template. RNase H digests the RNA template except for two polypurine tracts (PPTs) situated at the 5'-end and near the center of the genome. It is not clear if both polymerase and RNase H activities are simultaneous. RNase H probably can proceed both in a polymerase-dependent (RNA cut into small fragments by the same RT performing DNA synthesis) and a polymerase-independent mode (cleavage of remaining RNA fragments by free RTs). Secondly, RT performs DNA-directed plus-strand DNA synthesis using the PPTs that have not been removed by RNase H as primers. PPTs and tRNA primers are then removed by RNase H. The 3' and 5' ssDNA PBS regions hybridize to form a circular dsDNA intermediate. Strand displacement synthesis by RT to the PBS and PPT ends produces a blunt ended, linear dsDNA copy of the viral genome that includes long terminal repeats (LTRs) at both ends. Catalyzes viral DNA integration into the host chromosome, by performing a series of DNA cutting and joining reactions. This enzyme activity takes place after virion entry into a cell and reverse transcription of the RNA genome in dsDNA. The first step in the integration process is 3' processing. This step requires a complex comprising the viral genome, matrix protein, Vpr and integrase. This complex is called the pre-integration complex (PIC). The integrase protein removes 2 nucleotides from each 3' end of the viral DNA, leaving recessed CA OH's at the 3' ends. In the second step, the PIC enters cell nucleus. This process is mediated through integrase and Vpr proteins, and allows the virus to infect a non dividing cell. This ability to enter the nucleus is specific of lentiviruses, other retroviruses cannot and rely on cell division to access cell chromosomes. In the third step, termed strand transfer, the integrase protein joins the previously processed 3' ends to the 5' ends of strands of target cellular DNA at the site of integration. The 5'-ends are produced by integrase-catalyzed staggered cuts, 5 bp apart. A Y-shaped, gapped, recombination intermediate results, with the 5'-ends of the viral DNA strands and the 3' ends of target DNA strands remaining unjoined, flanking a gap of 5 bp. The last step is viral DNA integration into host chromosome. This involves host DNA repair synthesis in which the 5 bp gaps between the unjoined strands are filled in and then ligated. Since this process occurs at both cuts flanking the HIV genome, a 5 bp duplication of host DNA is produced at the ends of HIV-1 integration. Alternatively, Integrase may catalyze the excision of viral DNA just after strand transfer, this is termed disintegration. This is Gag-Pol polyprotein (gag-pol) from Homo sapiens (Human).